A 327-amino-acid polypeptide reads, in one-letter code: 2-methoxy-6-polyprenyl-1,4-benzoquinol methylase, mitochondrial (327 aa).

A mitochondrion-targeting transit peptide spans 1–49; sequence MAAPRCCVLWRVCGRGWWRATGHCRLPGCHRSWPWATLGTRSLSQEKRA. S-adenosyl-L-methionine-binding positions include threonine 117, aspartate 171, and 199–200; that span reads DA.

This sequence belongs to the class I-like SAM-binding methyltransferase superfamily. MenG/UbiE family. In terms of assembly, component of a multi-subunit COQ enzyme complex, composed of at least COQ3, COQ4, COQ5, COQ6, COQ7 and COQ9. Interacts with PYURF; the interaction is direct, stabilizes COQ5 protein and associates PYURF with COQ enzyme complex.

The protein resides in the mitochondrion inner membrane. It carries out the reaction 2-methoxy-6-(all-trans-decaprenyl)benzene-1,4-diol + S-adenosyl-L-methionine = 5-methoxy-2-methyl-3-(all-trans-decaprenyl)benzene-1,4-diol + S-adenosyl-L-homocysteine + H(+). The protein operates within cofactor biosynthesis; ubiquinone biosynthesis. Methyltransferase required for the conversion of 2-decaprenyl-6-methoxy-1,4-benzoquinol (DDMQH2) to 2-decaprenyl-3-methyl-6-methoxy-1,4-benzoquinol (DMQH2). This is 2-methoxy-6-polyprenyl-1,4-benzoquinol methylase, mitochondrial from Mus musculus (Mouse).